A 407-amino-acid polypeptide reads, in one-letter code: Imidazolonepropionase (407 aa).

The Fe(3+) site is built by His-73 and His-75. Zn(2+) is bound by residues His-73 and His-75. Positions 82, 145, and 178 each coordinate 4-imidazolone-5-propanoate. Tyr-145 contributes to the N-formimidoyl-L-glutamate binding site. His-243 provides a ligand contact to Fe(3+). Residue His-243 coordinates Zn(2+). Gln-246 contributes to the 4-imidazolone-5-propanoate binding site. Asp-318 contributes to the Fe(3+) binding site. Asp-318 contacts Zn(2+). 2 residues coordinate N-formimidoyl-L-glutamate: Asn-320 and Gly-322. Thr-323 serves as a coordination point for 4-imidazolone-5-propanoate.

The protein belongs to the metallo-dependent hydrolases superfamily. HutI family. The cofactor is Zn(2+). Fe(3+) serves as cofactor.

The protein localises to the cytoplasm. It catalyses the reaction 4-imidazolone-5-propanoate + H2O = N-formimidoyl-L-glutamate. The protein operates within amino-acid degradation; L-histidine degradation into L-glutamate; N-formimidoyl-L-glutamate from L-histidine: step 3/3. Its function is as follows. Catalyzes the hydrolytic cleavage of the carbon-nitrogen bond in imidazolone-5-propanoate to yield N-formimidoyl-L-glutamate. It is the third step in the universal histidine degradation pathway. The chain is Imidazolonepropionase from Serratia proteamaculans (strain 568).